Reading from the N-terminus, the 215-residue chain is N-(5'-phosphoribosyl)anthranilate isomerase (215 aa).

The protein belongs to the TrpF family.

It carries out the reaction N-(5-phospho-beta-D-ribosyl)anthranilate = 1-(2-carboxyphenylamino)-1-deoxy-D-ribulose 5-phosphate. The protein operates within amino-acid biosynthesis; L-tryptophan biosynthesis; L-tryptophan from chorismate: step 3/5. The chain is N-(5'-phosphoribosyl)anthranilate isomerase from Ruegeria sp. (strain TM1040) (Silicibacter sp.).